Here is a 226-residue protein sequence, read N- to C-terminus: PKHD-type hydroxylase Pput_0892 (226 aa).

The Fe2OG dioxygenase domain maps to 78-178; sequence KVFPPLINCY…RYAAFFWTQS (101 aa). H96, D98, and H159 together coordinate Fe cation. Residue R169 participates in 2-oxoglutarate binding.

The cofactor is Fe(2+). Requires L-ascorbate as cofactor.

The protein is PKHD-type hydroxylase Pput_0892 of Pseudomonas putida (strain ATCC 700007 / DSM 6899 / JCM 31910 / BCRC 17059 / LMG 24140 / F1).